Reading from the N-terminus, the 302-residue chain is Probable alpha-L-glutamate ligase (302 aa).

The ATP-grasp domain occupies 104 to 287; it reads MQLLSRKGIG…IAGMVFEFLE (184 aa). ATP contacts are provided by residues Lys-141, 178 to 179, Asp-187, and 211 to 213; these read EF and RSN. Residues Asp-248, Glu-260, and Asn-262 each contribute to the Mg(2+) site. Mn(2+) is bound by residues Asp-248, Glu-260, and Asn-262.

The protein belongs to the RimK family. The cofactor is Mg(2+). Mn(2+) is required as a cofactor.

The protein is Probable alpha-L-glutamate ligase of Psychromonas ingrahamii (strain DSM 17664 / CCUG 51855 / 37).